We begin with the raw amino-acid sequence, 427 residues long: Ribitol transporter (427 aa).

Residues 1 to 7 (MSVNNKQ) are Cytoplasmic-facing. A helical membrane pass occupies residues 8–28 (WYGLPLNLIWGYVAIAVFMTG). Residues 29–51 (DGFELAFLSHYIKALGFTPAQAS) are Extracellular-facing. A helical transmembrane segment spans residues 52–72 (FAFTLYGLAAALSAWVSGVVA). Over 73-79 (EIITPRK) the chain is Cytoplasmic. Residues 80 to 100 (AMLIGFVLWCVFHVLFLVFGL) traverse the membrane as a helical segment. At 101-107 (GRANYAL) the chain is on the extracellular side. Residues 108–128 (ILLFYGIRGLAYPLFLYSFIV) traverse the membrane as a helical segment. Residues 129-141 (AIIHNVRSDSSSS) lie on the Cytoplasmic side of the membrane. The chain crosses the membrane as a helical span at residues 142–162 (ALGWFWAVYSVGIGVFGSYIP). Residues 163–171 (SFTIPHIGE) are Extracellular-facing. Residues 172 to 192 (MGTLWLALLFCATGGIIALVS) traverse the membrane as a helical segment. Topologically, residues 193–238 (MRHTETPRHMQNLTTREKFAELGRAATLLYTNRSILFSSIVRIINT) are cytoplasmic. The chain crosses the membrane as a helical span at residues 239-259 (LSLFGFAVIMPMMFVDELGFT). At 260–263 (TSEW) the chain is on the extracellular side. Residues 264-284 (LQVWAAFFFTTIFSNVFWGIV) form a helical membrane-spanning segment. The Cytoplasmic portion of the chain corresponds to 285 to 295 (AEKMGWMKVIR). A helical membrane pass occupies residues 296–316 (WFGCIGMALSSLAFYYLPQHF). Residues 317-323 (GHNFAMA) lie on the Extracellular side of the membrane. Residues 324 to 344 (LVPAIALGIFVAAFVPMAAVF) form a helical membrane-spanning segment. Over 345–360 (PALEPNHKGAAISVYN) the chain is Cytoplasmic. The chain crosses the membrane as a helical span at residues 361–381 (LSAGLSNFLAPAIAVVLLPYF). Over 382 to 383 (ST) the chain is Extracellular. Residues 384–404 (IGVVIAYTALYILAFFLCPLI) traverse the membrane as a helical segment. Residues 405 to 427 (RVEQPGFTSDQHAKPFTANAAES) are Cytoplasmic-facing.

It belongs to the major facilitator superfamily. Sugar transporter (TC 2.A.1.1) family. CsbX subfamily.

The protein resides in the cell membrane. The protein is Ribitol transporter (rbtT) of Klebsiella pneumoniae.